The sequence spans 257 residues: MLFLISPAKSLDYEHPAPVPDAGVPHFSAAAGELIGLLRQHDERGIAELMDLSEPLAALNVARYAAFSPRPTSANSKPALFAFDGDVYGGLGAHELSRPQVRWVQEHVAILSGLYGVLRPLDRLQPYRLEMGTRLANPLGKDLYAFWRTRIAEHLNERLAGQRAPVVVNLASEEYFKAVDRSELRARVVHCVFQDWKGGAYKIISFHAKRARGLMVRYAALHRARSPRALAGFDLEGYAFDASASEPDRMVFRRRLP.

This sequence belongs to the UPF0246 family.

In Methylibium petroleiphilum (strain ATCC BAA-1232 / LMG 22953 / PM1), this protein is UPF0246 protein Mpe_A2092.